The primary structure comprises 600 residues: Elongation factor 4 (600 aa).

A tr-type G domain is found at 5-187 (KYIRNFSIIA…AIVNKLPPPK (183 aa)). GTP is bound by residues 17 to 22 (DHGKST) and 134 to 137 (NKLD).

It belongs to the TRAFAC class translation factor GTPase superfamily. Classic translation factor GTPase family. LepA subfamily.

It localises to the cell inner membrane. The enzyme catalyses GTP + H2O = GDP + phosphate + H(+). Functionally, required for accurate and efficient protein synthesis under certain stress conditions. May act as a fidelity factor of the translation reaction, by catalyzing a one-codon backward translocation of tRNAs on improperly translocated ribosomes. Back-translocation proceeds from a post-translocation (POST) complex to a pre-translocation (PRE) complex, thus giving elongation factor G a second chance to translocate the tRNAs correctly. Binds to ribosomes in a GTP-dependent manner. This is Elongation factor 4 from Rickettsia africae (strain ESF-5).